Here is a 168-residue protein sequence, read N- to C-terminus: Transcription elongation factor GreB (168 aa).

Residues K61–V84 are a coiled coil.

This sequence belongs to the GreA/GreB family. GreB subfamily.

Functionally, necessary for efficient RNA polymerase transcription elongation past template-encoded arresting sites. The arresting sites in DNA have the property of trapping a certain fraction of elongating RNA polymerases that pass through, resulting in locked ternary complexes. Cleavage of the nascent transcript by cleavage factors such as GreA or GreB allows the resumption of elongation from the new 3'terminus. GreB releases sequences of up to 9 nucleotides in length. The chain is Transcription elongation factor GreB from Pseudomonas aeruginosa (strain ATCC 15692 / DSM 22644 / CIP 104116 / JCM 14847 / LMG 12228 / 1C / PRS 101 / PAO1).